We begin with the raw amino-acid sequence, 335 residues long: tRNA pseudouridine synthase D (335 aa).

Asp-77 functions as the Nucleophile in the catalytic mechanism. Residues 152-308 (GFPNYFTEQR…AQHLSWSFIP (157 aa)) enclose the TRUD domain.

This sequence belongs to the pseudouridine synthase TruD family.

The catalysed reaction is uridine(13) in tRNA = pseudouridine(13) in tRNA. Functionally, responsible for synthesis of pseudouridine from uracil-13 in transfer RNAs. The chain is tRNA pseudouridine synthase D from Histophilus somni (strain 129Pt) (Haemophilus somnus).